We begin with the raw amino-acid sequence, 348 residues long: Lysophosphatidic acid receptor 2 (348 aa).

The Extracellular segment spans residues 1–30 (MGQCYYNETIGFFYNNSGKELSSHWRPKDV). N-linked (GlcNAc...) asparagine glycans are attached at residues Asn-7 and Asn-15. Residues 31–51 (VVVALGLTVSVLVLLTNLLVI) form a helical membrane-spanning segment. Residues 52-66 (AAIASNRRFHQPIYY) are Cytoplasmic-facing. The chain crosses the membrane as a helical span at residues 67-87 (LLGNLAAADLFAGVAYLFLMF). The Extracellular portion of the chain corresponds to 88 to 100 (HTGPRTARLSLEG). The helical transmembrane segment at 101–123 (WFLRQGLLDTSLTASVATLLAIA) threads the bilayer. Over 124–143 (VERHRSVMAVQLHSRLPRGR) the chain is Cytoplasmic. A helical membrane pass occupies residues 144-164 (VVMLIVGVWVAALGLGLLPAH). Residues 165–185 (SWHCLCALDRCSRMAPLLSRS) are Extracellular-facing. A helical transmembrane segment spans residues 186-206 (YLAVWALSSLLVFLLMVAVYT). Over 207–239 (RIFFYVRRRVQRMAEHVSCHPRYRETTLSLVKT) the chain is Cytoplasmic. The chain crosses the membrane as a helical span at residues 240-260 (VVIILGAFVVCWTPGQVVLLL). Residues 261–276 (DGLGCESCNVLAVEKY) lie on the Extracellular side of the membrane. A helical transmembrane segment spans residues 277-294 (FLLLAEANSLVNAAVYSC). Topologically, residues 295–348 (RDAEMRRTFRRLLCCACLRQSTRESVHYTSSAQGGASTRIMLPENGHPLMDSTL) are cytoplasmic. Cys-308 carries S-palmitoyl cysteine lipidation. The short motif at 345–348 (DSTL) is the PDZ-binding element.

It belongs to the G-protein coupled receptor 1 family. As to quaternary structure, interacts with SLC9A3R2/NHERF2, MAGI3 and PLCB3. Interacts with RALA and GRK2. Expressed most abundantly in testes and peripheral blood leukocytes with less expression in pancreas, spleen, thymus and prostate. Little or no expression in heart, brain, placenta, lung, liver, skeletal muscle, kidney, ovary, small intestine, or colon.

It is found in the cell surface. Its subcellular location is the cell membrane. In terms of biological role, receptor for lysophosphatidic acid (LPA), a mediator of diverse cellular activities. Seems to be coupled to the G(i)/G(o), G(12)/G(13), and G(q) families of heteromeric G proteins. Plays a key role in phospholipase C-beta (PLC-beta) signaling pathway. Stimulates phospholipase C (PLC) activity in a manner that is independent of RALA activation. This chain is Lysophosphatidic acid receptor 2, found in Homo sapiens (Human).